Here is a 528-residue protein sequence, read N- to C-terminus: Peptide chain release factor 3 (528 aa).

The 270-residue stretch at 10–279 (AKRRTFAIIS…GLVEWAPAPM (270 aa)) folds into the tr-type G domain. GTP-binding positions include 19–26 (SHPDAGKT), 87–91 (DTPGH), and 141–144 (NKLD).

This sequence belongs to the TRAFAC class translation factor GTPase superfamily. Classic translation factor GTPase family. PrfC subfamily.

It localises to the cytoplasm. Functionally, increases the formation of ribosomal termination complexes and stimulates activities of RF-1 and RF-2. It binds guanine nucleotides and has strong preference for UGA stop codons. It may interact directly with the ribosome. The stimulation of RF-1 and RF-2 is significantly reduced by GTP and GDP, but not by GMP. This is Peptide chain release factor 3 from Escherichia coli O1:K1 / APEC.